Reading from the N-terminus, the 479-residue chain is UDP-N-acetylmuramate--L-alanine ligase (479 aa).

Residue 128-134 (GAHGKTT) coordinates ATP.

The protein belongs to the MurCDEF family.

It is found in the cytoplasm. The enzyme catalyses UDP-N-acetyl-alpha-D-muramate + L-alanine + ATP = UDP-N-acetyl-alpha-D-muramoyl-L-alanine + ADP + phosphate + H(+). Its pathway is cell wall biogenesis; peptidoglycan biosynthesis. Functionally, cell wall formation. This is UDP-N-acetylmuramate--L-alanine ligase from Psychrobacter arcticus (strain DSM 17307 / VKM B-2377 / 273-4).